A 196-amino-acid polypeptide reads, in one-letter code: dTTP/UTP pyrophosphatase (196 aa).

Residue D77 is the Proton acceptor of the active site.

Belongs to the Maf family. YhdE subfamily. Requires a divalent metal cation as cofactor.

The protein resides in the cytoplasm. The catalysed reaction is dTTP + H2O = dTMP + diphosphate + H(+). It catalyses the reaction UTP + H2O = UMP + diphosphate + H(+). Nucleoside triphosphate pyrophosphatase that hydrolyzes dTTP and UTP. May have a dual role in cell division arrest and in preventing the incorporation of modified nucleotides into cellular nucleic acids. The polypeptide is dTTP/UTP pyrophosphatase (Christiangramia forsetii (strain DSM 17595 / CGMCC 1.15422 / KT0803) (Gramella forsetii)).